A 316-amino-acid polypeptide reads, in one-letter code: Formimidoylglutamase (316 aa).

The Mn(2+) site is built by His-127, Asp-156, His-158, Asp-160, Asp-247, and Asp-249.

This sequence belongs to the arginase family. Mn(2+) serves as cofactor.

It catalyses the reaction N-formimidoyl-L-glutamate + H2O = formamide + L-glutamate. Its pathway is amino-acid degradation; L-histidine degradation into L-glutamate; L-glutamate from N-formimidoyl-L-glutamate (hydrolase route): step 1/1. In terms of biological role, catalyzes the conversion of N-formimidoyl-L-glutamate to L-glutamate and formamide. The polypeptide is Formimidoylglutamase (Cupriavidus pinatubonensis (strain JMP 134 / LMG 1197) (Cupriavidus necator (strain JMP 134))).